The sequence spans 233 residues: Pyridoxine 5'-phosphate synthase (233 aa).

Residue Asn6 participates in 3-amino-2-oxopropyl phosphate binding. 8 to 9 (DH) serves as a coordination point for 1-deoxy-D-xylulose 5-phosphate. Arg17 lines the 3-amino-2-oxopropyl phosphate pocket. The active-site Proton acceptor is the His42. Residues Arg44 and His49 each contribute to the 1-deoxy-D-xylulose 5-phosphate site. The active-site Proton acceptor is the Glu69. Thr99 serves as a coordination point for 1-deoxy-D-xylulose 5-phosphate. His186 (proton donor) is an active-site residue. 3-amino-2-oxopropyl phosphate contacts are provided by residues Gly187 and 208-209 (GH).

It belongs to the PNP synthase family. In terms of assembly, homooctamer; tetramer of dimers.

The protein localises to the cytoplasm. The catalysed reaction is 3-amino-2-oxopropyl phosphate + 1-deoxy-D-xylulose 5-phosphate = pyridoxine 5'-phosphate + phosphate + 2 H2O + H(+). Its pathway is cofactor biosynthesis; pyridoxine 5'-phosphate biosynthesis; pyridoxine 5'-phosphate from D-erythrose 4-phosphate: step 5/5. In terms of biological role, catalyzes the complicated ring closure reaction between the two acyclic compounds 1-deoxy-D-xylulose-5-phosphate (DXP) and 3-amino-2-oxopropyl phosphate (1-amino-acetone-3-phosphate or AAP) to form pyridoxine 5'-phosphate (PNP) and inorganic phosphate. In Anaplasma phagocytophilum (strain HZ), this protein is Pyridoxine 5'-phosphate synthase.